A 75-amino-acid chain; its full sequence is Cytochrome c oxidase subunit 6C (75 aa).

At 1-13 (MSSGALTKPQMRG) the chain is on the mitochondrial matrix side. Residues 14 to 54 (LLAKRLRFHIVGAFAVSLGVAAFYKFAVAEPRKKAYADFYR) form a helical membrane-spanning segment. Residues 55–75 (NYDSMKDFEEMRKAGIFQSAK) lie on the Mitochondrial intermembrane side of the membrane.

The protein belongs to the cytochrome c oxidase subunit 6c family. Component of the cytochrome c oxidase (complex IV, CIV), a multisubunit enzyme composed of 14 subunits. The complex is composed of a catalytic core of 3 subunits MT-CO1, MT-CO2 and MT-CO3, encoded in the mitochondrial DNA, and 11 supernumerary subunits COX4I, COX5A, COX5B, COX6A, COX6B, COX6C, COX7A, COX7B, COX7C, COX8 and NDUFA4, which are encoded in the nuclear genome. The complex exists as a monomer or a dimer and forms supercomplexes (SCs) in the inner mitochondrial membrane with NADH-ubiquinone oxidoreductase (complex I, CI) and ubiquinol-cytochrome c oxidoreductase (cytochrome b-c1 complex, complex III, CIII), resulting in different assemblies (supercomplex SCI(1)III(2)IV(1) and megacomplex MCI(2)III(2)IV(2)).

Its subcellular location is the mitochondrion inner membrane. The protein operates within energy metabolism; oxidative phosphorylation. Functionally, component of the cytochrome c oxidase, the last enzyme in the mitochondrial electron transport chain which drives oxidative phosphorylation. The respiratory chain contains 3 multisubunit complexes succinate dehydrogenase (complex II, CII), ubiquinol-cytochrome c oxidoreductase (cytochrome b-c1 complex, complex III, CIII) and cytochrome c oxidase (complex IV, CIV), that cooperate to transfer electrons derived from NADH and succinate to molecular oxygen, creating an electrochemical gradient over the inner membrane that drives transmembrane transport and the ATP synthase. Cytochrome c oxidase is the component of the respiratory chain that catalyzes the reduction of oxygen to water. Electrons originating from reduced cytochrome c in the intermembrane space (IMS) are transferred via the dinuclear copper A center (CU(A)) of subunit 2 and heme A of subunit 1 to the active site in subunit 1, a binuclear center (BNC) formed by heme A3 and copper B (CU(B)). The BNC reduces molecular oxygen to 2 water molecules using 4 electrons from cytochrome c in the IMS and 4 protons from the mitochondrial matrix. The protein is Cytochrome c oxidase subunit 6C (COX6C) of Carlito syrichta (Philippine tarsier).